We begin with the raw amino-acid sequence, 312 residues long: Pseudouridine-5'-phosphate glycosidase 2 (312 aa).

The Proton donor role is filled by glutamate 31. Substrate-binding residues include lysine 93 and valine 113. Aspartate 145 contributes to the Mn(2+) binding site. Substrate is bound at residue 147–149 (SAD). Lysine 166 serves as the catalytic Nucleophile.

The protein belongs to the pseudouridine-5'-phosphate glycosidase family. Homotrimer. The cofactor is Mn(2+).

The catalysed reaction is D-ribose 5-phosphate + uracil = psi-UMP + H2O. Its function is as follows. Catalyzes the reversible cleavage of pseudouridine 5'-phosphate (PsiMP) to ribose 5-phosphate and uracil. Functions biologically in the cleavage direction, as part of a pseudouridine degradation pathway. The polypeptide is Pseudouridine-5'-phosphate glycosidase 2 (Photorhabdus laumondii subsp. laumondii (strain DSM 15139 / CIP 105565 / TT01) (Photorhabdus luminescens subsp. laumondii)).